Reading from the N-terminus, the 494-residue chain is MNAPVKPSQLIKGATGDWEVVIGLEIHAQVSSNAKLFSGAATAFGGDPNSHVSLVDAAMPGMLPVINEECVKQAIRSGLGLNAQINLRSVFDRKNYFYPDLPQGYQISQYKSPIVGEGIVVVDLPNGDSITVGIERLHLEQDAGKLLHDQHPTMTFVDLNRSGVALMEIVSKPDLRSSEQAKAYVSKLRTILRYLGTCDGDMEKGSLRADVNVSVRKPGEPYGTRCEIKNVNSIRFIGQAIEYEARRQIGILEDGGSIDQETRLYDPDKAETRSMRSKEEAHDYRYFPDPDLLPLEFSQAYVDELKTGLPELPDQKKSRFIGTFGLSSDDAGVLVSERESADFYEAVLAKLSDAARDGKLAANWVINELFGRLNKDGQNIDTSPVSAAQLAAIVDLIGEGTISGKIAKELFEIVWREGGDPRELVEARGMKQVTDLTAIEKVVDDIVASNPDKVAQAIAKPAMLGWFVGQVMKSSGGKANPQAVNDLLKRKLGL.

Belongs to the GatB/GatE family. GatB subfamily. In terms of assembly, heterotrimer of A, B and C subunits.

It catalyses the reaction L-glutamyl-tRNA(Gln) + L-glutamine + ATP + H2O = L-glutaminyl-tRNA(Gln) + L-glutamate + ADP + phosphate + H(+). The enzyme catalyses L-aspartyl-tRNA(Asn) + L-glutamine + ATP + H2O = L-asparaginyl-tRNA(Asn) + L-glutamate + ADP + phosphate + 2 H(+). Allows the formation of correctly charged Asn-tRNA(Asn) or Gln-tRNA(Gln) through the transamidation of misacylated Asp-tRNA(Asn) or Glu-tRNA(Gln) in organisms which lack either or both of asparaginyl-tRNA or glutaminyl-tRNA synthetases. The reaction takes place in the presence of glutamine and ATP through an activated phospho-Asp-tRNA(Asn) or phospho-Glu-tRNA(Gln). In Rhodopseudomonas palustris (strain BisB5), this protein is Aspartyl/glutamyl-tRNA(Asn/Gln) amidotransferase subunit B.